The sequence spans 145 residues: MAARVCCQLDPARDVLCLRPVGAESRGRPVSGPFGALPSPSSSAVPADHGAHLSLRGLPVCAFSSAGPCALRFTSARRMETTVNAHQVLPKVLHKRTLGLSAMSTTDLEAYFKDCVFKDWEELGEEIRLKVFVLGGCRHNFFTSA.

Positions 68-117 are mitochondrial targeting sequence; that stretch reads PCALRFTSARRMETTVNAHQVLPKVLHKRTLGLSAMSTTDLEAYFKDCVF.

The protein belongs to the orthohepadnavirus protein X family. As to quaternary structure, may form homodimer. May interact with host CEBPA, CFLAR, CREB1, DDB1, E4F1, HBXIP, HSPD1/HSP60, NFKBIA, POLR2E and SMAD4. Interacts with host SMC5-SMC6 complex and induces its degradation. Interacts with host TRPC4AP; leading to prevent ubiquitination of TRPC4AP. Interacts with host PLSCR1; this interaction promotes ubiquitination and degradation of HBx and impairs HBx-mediated cell proliferation. Post-translationally, a fraction may be phosphorylated in insect cells and HepG2 cells, a human hepatoblastoma cell line. Phosphorylated in vitro by host protein kinase C or mitogen-activated protein kinase. N-acetylated in insect cells.

The protein localises to the host cytoplasm. It localises to the host nucleus. It is found in the host mitochondrion. In terms of biological role, multifunctional protein that plays a role in silencing host antiviral defenses and promoting viral transcription. Does not seem to be essential for HBV infection. May be directly involved in development of cirrhosis and liver cancer (hepatocellular carcinoma). Most of cytosolic activities involve modulation of cytosolic calcium. The effect on apoptosis is controversial depending on the cell types in which the studies have been conducted. May induce apoptosis by localizing in mitochondria and causing loss of mitochondrial membrane potential. May also modulate apoptosis by binding host CFLAR, a key regulator of the death-inducing signaling complex (DISC). Promotes viral transcription by using the host E3 ubiquitin ligase DDB1 to target the SMC5-SMC6 complex to proteasomal degradation. This host complex would otherwise bind to viral episomal DNA, and prevents its transcription. Moderately stimulates transcription of many different viral and cellular transcription elements. Promoters and enhancers stimulated by HBx contain DNA binding sites for NF-kappa-B, AP-1, AP-2, c-EBP, ATF/CREB, or the calcium-activated factor NF-AT. The chain is Protein X from Homo sapiens (Human).